Here is a 198-residue protein sequence, read N- to C-terminus: Myb-related protein 340 (198 aa).

2 HTH myb-type domains span residues 10–62 and 63–117; these read DVEV…LNYL and RPDV…IQKH. DNA-binding regions (H-T-H motif) lie at residues 38 to 62 and 90 to 113; these read WNTI…LNYL and WSKI…NRTR.

In terms of tissue distribution, expressed only in flowers.

It localises to the nucleus. Transcription factor. This is Myb-related protein 340 from Antirrhinum majus (Garden snapdragon).